We begin with the raw amino-acid sequence, 167 residues long: Peptide deformylase (167 aa).

Fe cation-binding residues include Cys-91 and His-133. Residue Glu-134 is part of the active site. His-137 serves as a coordination point for Fe cation.

It belongs to the polypeptide deformylase family. Requires Fe(2+) as cofactor.

It catalyses the reaction N-terminal N-formyl-L-methionyl-[peptide] + H2O = N-terminal L-methionyl-[peptide] + formate. Removes the formyl group from the N-terminal Met of newly synthesized proteins. Requires at least a dipeptide for an efficient rate of reaction. N-terminal L-methionine is a prerequisite for activity but the enzyme has broad specificity at other positions. The chain is Peptide deformylase from Neisseria gonorrhoeae (strain ATCC 700825 / FA 1090).